An 837-amino-acid polypeptide reads, in one-letter code: Protein kintoun (837 aa).

Disordered regions lie at residues 100–119 (APSSRPGSGGDRGAAPGSHW), 205–224 (LPGVIPARPDGEPKGPLPDF), 230–249 (YPAAPGPRAPSPPEAALQPA), and 363–515 (AAAP…GPGT). The segment covering 233-242 (APGPRAPSPP) has biased composition (pro residues). A compositionally biased stretch (basic and acidic residues) spans 428-442 (GEERVPKPGEQDLSR). Residues 445 to 459 (GSPPGSVEEPSPGGE) are compositionally biased toward low complexity. Residues S461 and S467 each carry the phosphoserine modification. The segment covering 484–498 (ESARGDSSVETREES) has biased composition (basic and acidic residues). Phosphoserine is present on residues S640, S641, and S773.

Belongs to the PIH1 family. Kintoun subfamily. In terms of assembly, interacts with CFAP300. Interacts with DNAAF4. Interacts with DNAAF6/PIH1D3. Interacts with DNAI2 and HSPA1A.

It is found in the cytoplasm. It localises to the dynein axonemal particle. Its function is as follows. Required for cytoplasmic pre-assembly of axonemal dyneins, thereby playing a central role in motility in cilia and flagella. Involved in pre-assembly of dynein arm complexes in the cytoplasm before intraflagellar transport loads them for the ciliary compartment. This is Protein kintoun from Homo sapiens (Human).